Consider the following 200-residue polypeptide: Phycocyanobilin lyase subunit beta (200 aa).

The protein belongs to the CpcE/RpcE/PecE family. As to quaternary structure, cpcE and CpcF associate to form a lyase.

Its function is as follows. Required for the chromophorylation of the CpcA gene product. This is Phycocyanobilin lyase subunit beta (cpcF) from Nostoc sp. (strain PCC 7120 / SAG 25.82 / UTEX 2576).